The primary structure comprises 713 residues: Segment polarity protein dishevelled homolog DVL-3 (713 aa).

A DIX domain is found at 1-82; sequence MGETKVIYHL…RVVCWLVSAD (82 aa). Composition is skewed to polar residues over residues 87-98 and 118-127; these read DAGSVCADNQSD and HPNTRGSQEN. Residues 87-235 form a disordered region; the sequence is DAGSVCADNQ…PRIERSSSFS (149 aa). Positions 140–155 are enriched in basic and acidic residues; it reads AHRERPRRKETPEHAT. Over residues 173–189 the composition is skewed to low complexity; that stretch reads ESSSTLMSSELDSTSFF. Residues 199 to 210 are compositionally biased toward polar residues; that stretch reads RFSNSTEQSSAS. The segment covering 212–225 has biased composition (basic residues); that stretch reads LMRRHKRRRRKPKA. The region spanning 248–333 is the PDZ domain; the sequence is TVTLNMEKYN…KPGPITLTVA (86 aa). In terms of domain architecture, DEP spans 421–495; the sequence is PESGLEVRDR…SEQCYYIFGD (75 aa). Polar residues predominate over residues 508–518; sequence HDGSSGTSDQD. 2 disordered regions span residues 508–527 and 545–652; these read HDGS…PHPG and YSPH…GPPG. The segment covering 564-579 has biased composition (low complexity); that stretch reads GSQHSEGSRSSGSNRS. 2 stretches are compositionally biased toward basic and acidic residues: residues 580–593 and 602–618; these read STEK…KGGD and ESDH…RAAS. The span at 629–646 shows a compositional bias: basic residues; the sequence is HRSHHSIAHSIRSHHTHH.

The protein belongs to the DSH family.

Its subcellular location is the cytoplasm. In terms of biological role, involved in the signal transduction pathway mediated by multiple Wnt genes. Required during ciliogenesis for the docking of basal bodies to the apical plasma membrane. The sequence is that of Segment polarity protein dishevelled homolog DVL-3 from Xenopus tropicalis (Western clawed frog).